The following is a 368-amino-acid chain: D-alanine--D-alanine ligase (368 aa).

The region spanning 151–358 is the ATP-grasp domain; that stretch reads KKLLAAEGLP…YGTLVSTLVD (208 aa). 179-234 is a binding site for ATP; it reads KSRLHLPVFVKPARGGSSIGITRVAEWAALDDAIAHARLHDPKVIVESGIIGREVE. Mg(2+)-binding residues include D313, E325, and N327.

It belongs to the D-alanine--D-alanine ligase family. Requires Mg(2+) as cofactor. The cofactor is Mn(2+).

The protein resides in the cytoplasm. It carries out the reaction 2 D-alanine + ATP = D-alanyl-D-alanine + ADP + phosphate + H(+). It functions in the pathway cell wall biogenesis; peptidoglycan biosynthesis. Its function is as follows. Cell wall formation. In Rhodococcus jostii (strain RHA1), this protein is D-alanine--D-alanine ligase.